The chain runs to 216 residues: Large ribosomal subunit protein uL4 (216 aa).

Residues 47–77 form a disordered region; that stretch reads THKVKGMGEVSGTTKKPYRQKGTGNARQGSL.

It belongs to the universal ribosomal protein uL4 family. Part of the 50S ribosomal subunit.

In terms of biological role, one of the primary rRNA binding proteins, this protein initially binds near the 5'-end of the 23S rRNA. It is important during the early stages of 50S assembly. It makes multiple contacts with different domains of the 23S rRNA in the assembled 50S subunit and ribosome. Its function is as follows. Forms part of the polypeptide exit tunnel. The polypeptide is Large ribosomal subunit protein uL4 (Acidiphilium cryptum (strain JF-5)).